The sequence spans 216 residues: N-acetyltransferase 9-like protein (216 aa).

The N-acetyltransferase domain occupies 68–215 (VLLNENDEAK…DHVELELMRT (148 aa)).

The protein belongs to the acetyltransferase family. GNAT subfamily.

The protein resides in the cytoplasm. Its subcellular location is the nucleus. This chain is N-acetyltransferase 9-like protein, found in Schizosaccharomyces pombe (strain 972 / ATCC 24843) (Fission yeast).